We begin with the raw amino-acid sequence, 249 residues long: ATP synthase subunit a (249 aa).

6 helical membrane passes run 30–50 (QSPL…YVGM), 86–106 (FFPF…LGLL), 115–135 (HIAV…LASI), 146–166 (FLPA…EIIS), 191–211 (VFAG…VLAI), and 218–238 (IALT…FAIL).

The protein belongs to the ATPase A chain family. F-type ATPases have 2 components, CF(1) - the catalytic core - and CF(0) - the membrane proton channel. CF(1) has five subunits: alpha(3), beta(3), gamma(1), delta(1), epsilon(1). CF(0) has three main subunits: a(1), b(2) and c(9-12). The alpha and beta chains form an alternating ring which encloses part of the gamma chain. CF(1) is attached to CF(0) by a central stalk formed by the gamma and epsilon chains, while a peripheral stalk is formed by the delta and b chains.

It is found in the cell inner membrane. In terms of biological role, key component of the proton channel; it plays a direct role in the translocation of protons across the membrane. This Gluconobacter oxydans (strain 621H) (Gluconobacter suboxydans) protein is ATP synthase subunit a.